A 287-amino-acid polypeptide reads, in one-letter code: Phosphatidylserine decarboxylase proenzyme (287 aa).

Residues D90, H147, and S252 each act as charge relay system; for autoendoproteolytic cleavage activity in the active site. S252 (schiff-base intermediate with substrate; via pyruvic acid; for decarboxylase activity) is an active-site residue. A Pyruvic acid (Ser); by autocatalysis modification is found at S252.

This sequence belongs to the phosphatidylserine decarboxylase family. PSD-B subfamily. Prokaryotic type I sub-subfamily. As to quaternary structure, heterodimer of a large membrane-associated beta subunit and a small pyruvoyl-containing alpha subunit. Pyruvate is required as a cofactor. In terms of processing, is synthesized initially as an inactive proenzyme. Formation of the active enzyme involves a self-maturation process in which the active site pyruvoyl group is generated from an internal serine residue via an autocatalytic post-translational modification. Two non-identical subunits are generated from the proenzyme in this reaction, and the pyruvate is formed at the N-terminus of the alpha chain, which is derived from the carboxyl end of the proenzyme. The autoendoproteolytic cleavage occurs by a canonical serine protease mechanism, in which the side chain hydroxyl group of the serine supplies its oxygen atom to form the C-terminus of the beta chain, while the remainder of the serine residue undergoes an oxidative deamination to produce ammonia and the pyruvoyl prosthetic group on the alpha chain. During this reaction, the Ser that is part of the protease active site of the proenzyme becomes the pyruvoyl prosthetic group, which constitutes an essential element of the active site of the mature decarboxylase.

It is found in the cell membrane. The catalysed reaction is a 1,2-diacyl-sn-glycero-3-phospho-L-serine + H(+) = a 1,2-diacyl-sn-glycero-3-phosphoethanolamine + CO2. It functions in the pathway phospholipid metabolism; phosphatidylethanolamine biosynthesis; phosphatidylethanolamine from CDP-diacylglycerol: step 2/2. Functionally, catalyzes the formation of phosphatidylethanolamine (PtdEtn) from phosphatidylserine (PtdSer). The polypeptide is Phosphatidylserine decarboxylase proenzyme (Pseudomonas putida (strain GB-1)).